Consider the following 601-residue polypeptide: Tripeptidyl-peptidase SED4 (601 aa).

The signal sequence occupies residues methionine 1–alanine 22. The propeptide at alanine 23 to threonine 202 is removed in mature form. N-linked (GlcNAc...) asparagine glycans are attached at residues asparagine 210 and asparagine 281. Positions threonine 212–tyrosine 601 constitute a Peptidase S53 domain. Catalysis depends on charge relay system residues glutamate 288 and aspartate 292. The N-linked (GlcNAc...) asparagine glycan is linked to asparagine 323. Catalysis depends on serine 504, which acts as the Charge relay system. Ca(2+) is bound by residues aspartate 546 and isoleucine 547. N-linked (GlcNAc...) asparagine glycosylation occurs at asparagine 575. Ca(2+) contacts are provided by glycine 579 and aspartate 581.

Ca(2+) serves as cofactor.

The protein localises to the secreted. It localises to the extracellular space. It carries out the reaction Release of an N-terminal tripeptide from a polypeptide.. Functionally, secreted tripeptidyl-peptidase which degrades proteins at acidic pHs and is involved in virulence. The chain is Tripeptidyl-peptidase SED4 (SED4) from Arthroderma otae (strain ATCC MYA-4605 / CBS 113480) (Microsporum canis).